Consider the following 408-residue polypeptide: Lupus La protein (408 aa).

Positions 7-99 constitute an HTH La-type RNA-binding domain; sequence NEKMAALEAK…RRSPSKPLPE (93 aa). Phosphoserine occurs at positions 92 and 94. The region spanning 111-187 is the RRM domain; sequence RSVYIKGFPT…TDLLILFKDD (77 aa). Position 116 is an N6-acetyllysine (Lys-116). The residue at position 120 (Thr-120) is a Phosphothreonine. The residue at position 128 (Lys-128) is an N6-acetyllysine. Ser-225 is modified (phosphoserine). The xRRM domain maps to 227–348; the sequence is EEKIGCLLKF…KGKGNKAAQP (122 aa). N6-acetyllysine is present on residues Lys-328, Lys-341, and Lys-360. Over residues 329 to 342 the composition is skewed to basic residues; it reads WKSKGRRFKGKGKG. The tract at residues 329 to 408 is disordered; it reads WKSKGRRFKG…QKTENGAGDQ (80 aa). Thr-362 carries the post-translational modification Phosphothreonine. At Ser-366 the chain carries Phosphoserine; by CK2. A compositionally biased stretch (basic and acidic residues) spans 384–395; sequence RAREETDKEEPA.

As to quaternary structure, interacts with DDX15. May interact with RUFY1. In terms of processing, phosphorylated. The phosphorylation sites are at the C-terminal part of the protein. Post-translationally, the N-terminus is blocked.

It localises to the nucleus. In terms of biological role, binds to the 3' poly(U) terminus of nascent RNA polymerase III transcripts, protecting them from exonuclease digestion and facilitating their folding and maturation. In case of Coxsackievirus B3 infection, binds to the viral internal ribosome entry site (IRES) and stimulates the IRES-mediated translation. The chain is Lupus La protein (SSB) from Homo sapiens (Human).